We begin with the raw amino-acid sequence, 361 residues long: Phospho-N-acetylmuramoyl-pentapeptide-transferase (361 aa).

Transmembrane regions (helical) follow at residues Thr-25–Asp-45, Thr-72–Ala-92, Leu-95–Tyr-115, Leu-135–Ala-155, Val-169–Gly-189, Gly-200–Ala-220, Leu-240–Pro-260, Ile-264–Ala-284, Ile-289–Val-309, and Gln-338–Leu-358.

It belongs to the glycosyltransferase 4 family. MraY subfamily. Mg(2+) is required as a cofactor.

The protein localises to the cell inner membrane. It carries out the reaction UDP-N-acetyl-alpha-D-muramoyl-L-alanyl-gamma-D-glutamyl-meso-2,6-diaminopimeloyl-D-alanyl-D-alanine + di-trans,octa-cis-undecaprenyl phosphate = di-trans,octa-cis-undecaprenyl diphospho-N-acetyl-alpha-D-muramoyl-L-alanyl-D-glutamyl-meso-2,6-diaminopimeloyl-D-alanyl-D-alanine + UMP. Its pathway is cell wall biogenesis; peptidoglycan biosynthesis. Functionally, catalyzes the initial step of the lipid cycle reactions in the biosynthesis of the cell wall peptidoglycan: transfers peptidoglycan precursor phospho-MurNAc-pentapeptide from UDP-MurNAc-pentapeptide onto the lipid carrier undecaprenyl phosphate, yielding undecaprenyl-pyrophosphoryl-MurNAc-pentapeptide, known as lipid I. This is Phospho-N-acetylmuramoyl-pentapeptide-transferase from Rhodopseudomonas palustris (strain ATCC BAA-98 / CGA009).